The following is a 93-amino-acid chain: Molybdopterin synthase sulfur carrier subunit (93 aa).

Position 93 is a 1-thioglycine; alternate (G93). G93 is subject to Glycyl adenylate; alternate.

It belongs to the MoaD family. MOCS2A subfamily. Heterotetramer; composed of 2 small (MOCS2A) and 2 large (MOCS2B) subunits. Post-translationally, C-terminal thiocarboxylation occurs in 2 steps, it is first acyl-adenylated (-COAMP) via the hesA/moeB/thiF part of uba4, then thiocarboxylated (-COSH) via the rhodanese domain of uba4.

It localises to the cytoplasm. It functions in the pathway cofactor biosynthesis; molybdopterin biosynthesis. In terms of biological role, acts as a sulfur carrier required for molybdopterin biosynthesis. Component of the molybdopterin synthase complex that catalyzes the conversion of precursor Z into molybdopterin by mediating the incorporation of 2 sulfur atoms into precursor Z to generate a dithiolene group. In the complex, serves as sulfur donor by being thiocarboxylated (-COSH) at its C-terminus by uba4. After interaction with MOCS2B, the sulfur is then transferred to precursor Z to form molybdopterin. This chain is Molybdopterin synthase sulfur carrier subunit, found in Pyrenophora tritici-repentis (strain Pt-1C-BFP) (Wheat tan spot fungus).